The primary structure comprises 944 residues: DNA ligase 4 (944 aa).

Glutamate 280, lysine 282, arginine 287, glutamate 340, phenylalanine 382, glutamate 442, lysine 447, lysine 464, and lysine 466 together coordinate ATP. The active-site N6-AMP-lysine intermediate is lysine 282. Glutamate 340 is a Mg(2+) binding site. Mg(2+) is bound at residue glutamate 442. BRCT domains lie at 681-780 (PISN…PNYC) and 836-941 (FPLF…DFPV).

The protein belongs to the ATP-dependent DNA ligase family. As to quaternary structure, component of the DNA ligase IV complex, composed of DNL4, LIF1 and NEJ1. Interacts (via BRCT domain) with LIF1. Interacts with NEJ1. Interacts with POL4 in the DNL4-LIF1 complex. It depends on Mg(2+) as a cofactor.

The protein resides in the nucleus. It catalyses the reaction ATP + (deoxyribonucleotide)n-3'-hydroxyl + 5'-phospho-(deoxyribonucleotide)m = (deoxyribonucleotide)n+m + AMP + diphosphate.. DNA ligase involved in DNA non-homologous end joining (NHEJ); required for double-strand break (DSB) repair. This chain is DNA ligase 4 (DNL4), found in Saccharomyces cerevisiae (strain ATCC 204508 / S288c) (Baker's yeast).